The following is a 133-amino-acid chain: Ribosome-binding factor A (133 aa).

The protein belongs to the RbfA family. As to quaternary structure, monomer. Binds 30S ribosomal subunits, but not 50S ribosomal subunits or 70S ribosomes.

It is found in the cytoplasm. Functionally, one of several proteins that assist in the late maturation steps of the functional core of the 30S ribosomal subunit. Associates with free 30S ribosomal subunits (but not with 30S subunits that are part of 70S ribosomes or polysomes). Required for efficient processing of 16S rRNA. May interact with the 5'-terminal helix region of 16S rRNA. This chain is Ribosome-binding factor A, found in Bordetella parapertussis (strain 12822 / ATCC BAA-587 / NCTC 13253).